Consider the following 257-residue polypeptide: Chlorocatechol 1,2-dioxygenase (257 aa).

Fe cation is bound by residues Y134, Y169, H194, and H196.

This sequence belongs to the intradiol ring-cleavage dioxygenase family. Fe(3+) is required as a cofactor.

It catalyses the reaction 4-chlorocatechol + O2 = 3-chloro-cis,cis-muconate + 2 H(+). The catalysed reaction is 3,5-dichlorocatechol + O2 = (2E,4E)-2,4-dichloromuconate + 2 H(+). This Rhodococcus opacus (Nocardia opaca) protein is Chlorocatechol 1,2-dioxygenase (clcA).